Reading from the N-terminus, the 285-residue chain is Probable enoyl-CoA hydratase echA12 (285 aa).

Belongs to the enoyl-CoA hydratase/isomerase family.

It carries out the reaction a (3S)-3-hydroxyacyl-CoA = a (2E)-enoyl-CoA + H2O. The catalysed reaction is a 4-saturated-(3S)-3-hydroxyacyl-CoA = a (3E)-enoyl-CoA + H2O. Could possibly oxidize fatty acids using specific components. The sequence is that of Probable enoyl-CoA hydratase echA12 (echA12) from Mycobacterium tuberculosis (strain CDC 1551 / Oshkosh).